A 141-amino-acid polypeptide reads, in one-letter code: Nucleoside diphosphate kinase (141 aa).

6 residues coordinate ATP: Lys11, Phe59, Arg87, Thr93, Arg104, and Asn114. The active-site Pros-phosphohistidine intermediate is His117.

It belongs to the NDK family. Homotetramer. The cofactor is Mg(2+).

The protein resides in the cytoplasm. The catalysed reaction is a 2'-deoxyribonucleoside 5'-diphosphate + ATP = a 2'-deoxyribonucleoside 5'-triphosphate + ADP. It carries out the reaction a ribonucleoside 5'-diphosphate + ATP = a ribonucleoside 5'-triphosphate + ADP. In terms of biological role, major role in the synthesis of nucleoside triphosphates other than ATP. The ATP gamma phosphate is transferred to the NDP beta phosphate via a ping-pong mechanism, using a phosphorylated active-site intermediate. In Legionella pneumophila subsp. pneumophila (strain Philadelphia 1 / ATCC 33152 / DSM 7513), this protein is Nucleoside diphosphate kinase.